A 357-amino-acid polypeptide reads, in one-letter code: Fructose-bisphosphate aldolase (357 aa).

Substrate is bound by residues arginine 49 and lysine 140. Glutamate 183 acts as the Proton acceptor in catalysis. The active-site Schiff-base intermediate with dihydroxyacetone-P is lysine 225.

This sequence belongs to the class I fructose-bisphosphate aldolase family.

It catalyses the reaction beta-D-fructose 1,6-bisphosphate = D-glyceraldehyde 3-phosphate + dihydroxyacetone phosphate. Its pathway is carbohydrate degradation; glycolysis; D-glyceraldehyde 3-phosphate and glycerone phosphate from D-glucose: step 4/4. The polypeptide is Fructose-bisphosphate aldolase (fba) (Dictyostelium discoideum (Social amoeba)).